The primary structure comprises 161 residues: Transcription initiation factor TFIID subunit 12 (161 aa).

The disordered stretch occupies residues 15 to 55; that stretch reads FSSIKPEPASTPPQGSMANSTAVVKIPGTPGAGGRLSPENN. Lys-19 participates in a covalent cross-link: Glycyl lysine isopeptide (Lys-Gly) (interchain with G-Cter in SUMO2). The segment covering 26–36 has biased composition (polar residues); it reads PPQGSMANSTA. Thr-43 is subject to Phosphothreonine. A Phosphoserine modification is found at Ser-51. Thr-59 is modified (phosphothreonine). Residues 59 to 126 enclose the Histone-fold domain; that stretch reads TKKKLQDLVR…QLHLERQWNM (68 aa).

It belongs to the TAF12 family. As to quaternary structure, component of the TFIID basal transcription factor complex, composed of TATA-box-binding protein TBP, and a number of TBP-associated factors (TAFs), including TAF1, TAF2, TAF3, TAF4, TAF5, TAF6, TAF7, TAF8, TAF9, TAF10, TAF11, TAF12 and TAF13. Component of the TATA-binding protein-free TAF complex (TFTC), the PCAF histone acetylase complex and the STAGA transcription coactivator-HAT complex. Component of the PCAF complex, at least composed of TADA2L/ADA2, TADA3L/ADA3, TAF5L/PAF65-beta, SUPT3H, TAF6L, TAF9, TAF10, TAF12 and TRRAP. Component of the STAGA transcription coactivator-HAT complex, at least composed of SUPT3H, GCN5L2, TAF5L, TAF6L, STAF65-gamma/SUPT7L, TADA3L, TAD1L, TAF10, TAF12, TRRAP and TAF9. Interacts with ATF7 (via the transactivation domain); the interaction is prevented by sumoylation of ATF7. Interacts with TBP; the interaction is direct. Interacts with TAF10; the interaction is direct. Interacts with ATF7, promoting transactivation by ATF7. In terms of assembly, does not promote the transactivation of ATF7. Ubiquitous.

Its subcellular location is the nucleus. Functionally, the TFIID basal transcription factor complex plays a major role in the initiation of RNA polymerase II (Pol II)-dependent transcription. TFIID recognizes and binds promoters with or without a TATA box via its subunit TBP, a TATA-box-binding protein, and promotes assembly of the pre-initiation complex (PIC). The TFIID complex consists of TBP and TBP-associated factors (TAFs), including TAF1, TAF2, TAF3, TAF4, TAF5, TAF6, TAF7, TAF8, TAF9, TAF10, TAF11, TAF12 and TAF13. Component of the TATA-binding protein-free TAF complex (TFTC), the PCAF histone acetylase complex and the STAGA transcription coactivator-HAT complex. This Homo sapiens (Human) protein is Transcription initiation factor TFIID subunit 12.